A 23-amino-acid chain; its full sequence is Caerin-4.3 (23 aa).

As to expression, expressed by the skin parotoid and/or rostral glands.

The protein resides in the secreted. In terms of biological role, antibacterial peptide, that adopts an alpha helical conformation which can disrupt bacterial membranes. Each caerin displays a different antimicrobial specificity. The chain is Caerin-4.3 from Ranoidea caerulea (Green tree frog).